A 274-amino-acid polypeptide reads, in one-letter code: Protein TIC 20-I, chloroplastic (274 aa).

The transit peptide at 1–65 (MITGYSTPSA…ELPRVSRGVP (65 aa)) directs the protein to the chloroplast. The next 4 membrane-spanning stretches (helical) occupy residues 130-152 (LPYLMPLHETWMYAETAYHLHPF), 167-187 (IGRLPSWFLMAYFFVAYLGIV), 200-220 (VVMGMLLEIALQVIGTVSKWM), and 229-249 (FGMHFWTAVAFAYLFTVLESI).

This sequence belongs to the Tic20 family. As to quaternary structure, part of the Tic complex. Component of the 1-MD complex, composed of TIC20-I, TIC214, TIC100 and TIC56. Interacts with the translocating preproteins. Hydrolysis of ATP is essential for the formation of this complex. The 1-MD complex interacts with TIC21. As to expression, expressed in leaves, shoots and roots. High expression in mature photosynthetic tissues. Lower levels in non-photosynthetic tissues and roots.

The protein localises to the plastid. Its subcellular location is the chloroplast inner membrane. Its function is as follows. Involved in protein precursor import into chloroplasts. May be part of an intermediate translocation complex acting as a protein-conducting channel at the inner envelope. Seems to be specific for photosynthesis-related pre-proteins. Partially redundant with TIC20-IV, but not with TIC20-II or TIC20-V. This Arabidopsis thaliana (Mouse-ear cress) protein is Protein TIC 20-I, chloroplastic.